Consider the following 582-residue polypeptide: Aspartate--tRNA(Asp/Asn) ligase (582 aa).

Residue Glu-177 participates in L-aspartate binding. An aspartate region spans residues Gln-201–Lys-204. Residue Arg-223 coordinates L-aspartate. ATP contacts are provided by residues Arg-223–Glu-225 and Gln-232. His-447 contributes to the L-aspartate binding site. Glu-481 provides a ligand contact to ATP. Arg-488 provides a ligand contact to L-aspartate. Residue Gly-533–Arg-536 participates in ATP binding.

Belongs to the class-II aminoacyl-tRNA synthetase family. Type 1 subfamily. In terms of assembly, homodimer.

The protein resides in the cytoplasm. It carries out the reaction tRNA(Asx) + L-aspartate + ATP = L-aspartyl-tRNA(Asx) + AMP + diphosphate. Functionally, aspartyl-tRNA synthetase with relaxed tRNA specificity since it is able to aspartylate not only its cognate tRNA(Asp) but also tRNA(Asn). Reaction proceeds in two steps: L-aspartate is first activated by ATP to form Asp-AMP and then transferred to the acceptor end of tRNA(Asp/Asn). The sequence is that of Aspartate--tRNA(Asp/Asn) ligase from Chlamydia muridarum (strain MoPn / Nigg).